The following is a 147-amino-acid chain: Cyanate hydratase (147 aa).

Catalysis depends on residues R88, E91, and S114.

It belongs to the cyanase family.

It carries out the reaction cyanate + hydrogencarbonate + 3 H(+) = NH4(+) + 2 CO2. Functionally, catalyzes the reaction of cyanate with bicarbonate to produce ammonia and carbon dioxide. This is Cyanate hydratase from Cupriavidus necator (strain ATCC 17699 / DSM 428 / KCTC 22496 / NCIMB 10442 / H16 / Stanier 337) (Ralstonia eutropha).